The sequence spans 716 residues: Fatty acid oxidation complex subunit alpha (716 aa).

Residues 1-189 (MIYQSPTIQV…KVGAIDAVVA (189 aa)) are enoyl-CoA hydratase/isomerase. D296 is a substrate binding site. Residues 311–716 (QAVNSAAVLG…AATNGSYYPA (406 aa)) are 3-hydroxyacyl-CoA dehydrogenase. NAD(+) is bound by residues M324, D343, 400 to 402 (VVE), K407, and S429. H450 (for 3-hydroxyacyl-CoA dehydrogenase activity) is an active-site residue. N453 is an NAD(+) binding site. Substrate-binding residues include N500 and Y660.

In the N-terminal section; belongs to the enoyl-CoA hydratase/isomerase family. This sequence in the C-terminal section; belongs to the 3-hydroxyacyl-CoA dehydrogenase family. As to quaternary structure, heterotetramer of two alpha chains (FadB) and two beta chains (FadA).

It carries out the reaction a (3S)-3-hydroxyacyl-CoA + NAD(+) = a 3-oxoacyl-CoA + NADH + H(+). The catalysed reaction is a (3S)-3-hydroxyacyl-CoA = a (2E)-enoyl-CoA + H2O. The enzyme catalyses a 4-saturated-(3S)-3-hydroxyacyl-CoA = a (3E)-enoyl-CoA + H2O. It catalyses the reaction (3S)-3-hydroxybutanoyl-CoA = (3R)-3-hydroxybutanoyl-CoA. It carries out the reaction a (3Z)-enoyl-CoA = a 4-saturated (2E)-enoyl-CoA. The catalysed reaction is a (3E)-enoyl-CoA = a 4-saturated (2E)-enoyl-CoA. Its pathway is lipid metabolism; fatty acid beta-oxidation. Its function is as follows. Involved in the aerobic and anaerobic degradation of long-chain fatty acids via beta-oxidation cycle. Catalyzes the formation of 3-oxoacyl-CoA from enoyl-CoA via L-3-hydroxyacyl-CoA. It can also use D-3-hydroxyacyl-CoA and cis-3-enoyl-CoA as substrate. The polypeptide is Fatty acid oxidation complex subunit alpha (Shewanella loihica (strain ATCC BAA-1088 / PV-4)).